The chain runs to 154 residues: Interleukin-2 (154 aa).

Positions 1-20 (MYRMQLLSCIALSLALVTNS) are cleaved as a signal peptide. A glycan (O-linked (GalNAc...) threonine) is linked at T23. C78 and C126 form a disulfide bridge.

The protein belongs to the IL-2 family.

It is found in the secreted. Functionally, cytokine produced by activated CD4-positive helper T-cells and to a lesser extend activated CD8-positive T-cells and natural killer (NK) cells that plays pivotal roles in the immune response and tolerance. Binds to a receptor complex composed of either the high-affinity trimeric IL-2R (IL2RA/CD25, IL2RB/CD122 and IL2RG/CD132) or the low-affinity dimeric IL-2R (IL2RB and IL2RG). Interaction with the receptor leads to oligomerization and conformation changes in the IL-2R subunits resulting in downstream signaling starting with phosphorylation of JAK1 and JAK3. In turn, JAK1 and JAK3 phosphorylate the receptor to form a docking site leading to the phosphorylation of several substrates including STAT5. This process leads to activation of several pathways including STAT, phosphoinositide-3-kinase/PI3K and mitogen-activated protein kinase/MAPK pathways. Functions as a T-cell growth factor and can increase NK-cell cytolytic activity as well. Promotes strong proliferation of activated B-cells and subsequently immunoglobulin production. Plays a pivotal role in regulating the adaptive immune system by controlling the survival and proliferation of regulatory T-cells, which are required for the maintenance of immune tolerance. Moreover, participates in the differentiation and homeostasis of effector T-cell subsets, including Th1, Th2, Th17 as well as memory CD8-positive T-cells. This is Interleukin-2 (IL2) from Macaca fascicularis (Crab-eating macaque).